The primary structure comprises 645 residues: Macrolide export ATP-binding/permease protein MacB (645 aa).

One can recognise an ABC transporter domain in the interval isoleucine 6–lysine 244. Glycine 42–serine 49 lines the ATP pocket. 4 helical membrane passes run alanine 271–glycine 291, phenylalanine 520–methionine 540, valine 577–isoleucine 597, and proline 608–leucine 628.

It belongs to the ABC transporter superfamily. Macrolide exporter (TC 3.A.1.122) family. As to quaternary structure, homodimer.

Its subcellular location is the cell inner membrane. Non-canonical ABC transporter that contains transmembrane domains (TMD), which form a pore in the inner membrane, and an ATP-binding domain (NBD), which is responsible for energy generation. Confers resistance against macrolides. The chain is Macrolide export ATP-binding/permease protein MacB from Hyphomonas neptunium (strain ATCC 15444).